The following is a 603-amino-acid chain: MALRTGSPALVVLLAFWVALGPCYLQGTDPGASADAEGPQCPVTCTCSYDDYTDELSVFCSSRNLTQLPDGIPVSTRALWLDGNNLSSIPSAAFQNLSSLDFLNLQGSWLRSLEPQALLGLQNLYHLHLERNLLRSLAAGLFRHTPSLASLSLGNNLLGRLEEGLFRGLSHLWDLNLGWNSLVVLPDTVFQGLGNLHELVLAGNKLTYLQPALLCGLGELRELDLSRNALRSVKANVFIHLPRLQKLYLDRNLITAVAPRAFLGMKALRWLDLSHNRVAGLLEDTFPGLLGLHVLRLAHNAITSLRPRTFKDLHFLEELQLGHNRIRQLGEKTFEGLGQLEVLTLNDNQIHEVKVGAFFGLFNVAVMNLSGNCLRSLPEHVFQGLGRLHSLHLEHSCLGRIRLHTFAGLSGLRRLFLRDNSISSIEEQSLAGLSELLELDLTANQLTHLPRQLFQGLGQLEYLLLSNNQLTMLSEDVLGPLQRAFWLDLSHNRLETPAEGLFSSLGRLRYLNLRNNSLQTFVPQPGLERLWLDANPWDCSCPLKALRDFALQNPGVVPRFVQTVCEGDDCQPVYTYNNITCAGPANVSGLDLRDISETLFVHC.

A signal peptide spans 1 to 23; the sequence is MALRTGSPALVVLLAFWVALGPC. In terms of domain architecture, LRRNT spans 32 to 74; the sequence is ASADAEGPQCPVTCTCSYDDYTDELSVFCSSRNLTQLPDGIPV. 2 cysteine pairs are disulfide-bonded: cysteine 41/cysteine 47 and cysteine 45/cysteine 60. Asparagine 64, asparagine 85, and asparagine 96 each carry an N-linked (GlcNAc...) asparagine glycan. 19 LRR repeats span residues 75 to 96, 99 to 120, 123 to 144, 147 to 168, 171 to 192, 195 to 216, 219 to 240, 243 to 264, 267 to 288, 291 to 312, 315 to 336, 339 to 360, 363 to 384, 387 to 408, 411 to 432, 435 to 456, 459 to 480, 483 to 504, and 507 to 528; these read STRA…AFQN, SLDF…ALLG, NLYH…LFRH, SLAS…LFRG, HLWD…VFQG, NLHE…LLCG, ELRE…VFIH, RLQK…AFLG, ALRW…TFPG, GLHV…TFKD, FLEE…TFEG, QLEV…AFFG, NVAV…VFQG, RLHS…TFAG, GLRR…SLAG, ELLE…LFQG, QLEY…VLGP, RAFW…LFSS, and RLRY…PGLE. Asparagine 368 carries an N-linked (GlcNAc...) asparagine glycan. Residue asparagine 515 is glycosylated (N-linked (GlcNAc...) asparagine). The 69-residue stretch at 535–603 folds into the LRRCT domain; it reads NPWDCSCPLK…DISETLFVHC (69 aa). 3 disulfide bridges follow: cysteine 539–cysteine 581, cysteine 541–cysteine 603, and cysteine 565–cysteine 570. Residues asparagine 578 and asparagine 586 are each glycosylated (N-linked (GlcNAc...) asparagine).

Forms a ternary complex with IGF1 and IGFBP3.

The protein resides in the secreted. It is found in the extracellular space. Functionally, may have an important role in regulating the access of circulating IGFs to the tissues. The polypeptide is Insulin-like growth factor-binding protein complex acid labile subunit (Igfals) (Mus musculus (Mouse)).